The following is an 89-amino-acid chain: MAHKKAGGSSRNGRDSAGQRLGVKKFGGELVIPGNIIVRQRGTKFYPGTNVGMGKDHTLFATAMGKVSFKHKAEGRTFVVVEPLPEAAE.

Residues 1 to 20 (MAHKKAGGSSRNGRDSAGQR) form a disordered region.

It belongs to the bacterial ribosomal protein bL27 family.

The polypeptide is Large ribosomal subunit protein bL27 (Paramagnetospirillum magneticum (strain ATCC 700264 / AMB-1) (Magnetospirillum magneticum)).